A 317-amino-acid polypeptide reads, in one-letter code: tRNA(Ile)-lysidine synthase (317 aa).

Position 30 to 35 (30 to 35 (SGGSDS)) interacts with ATP.

The protein belongs to the tRNA(Ile)-lysidine synthase family.

The protein localises to the cytoplasm. The catalysed reaction is cytidine(34) in tRNA(Ile2) + L-lysine + ATP = lysidine(34) in tRNA(Ile2) + AMP + diphosphate + H(+). Its function is as follows. Ligates lysine onto the cytidine present at position 34 of the AUA codon-specific tRNA(Ile) that contains the anticodon CAU, in an ATP-dependent manner. Cytidine is converted to lysidine, thus changing the amino acid specificity of the tRNA from methionine to isoleucine. The sequence is that of tRNA(Ile)-lysidine synthase from Chlamydia felis (strain Fe/C-56) (Chlamydophila felis).